The sequence spans 328 residues: Tryptophan--tRNA ligase (328 aa).

ATP-binding positions include 11–13 (QPT) and 19–20 (GN). Positions 12–20 (PTGNIHLGN) match the 'HIGH' region motif. Aspartate 135 lines the L-tryptophan pocket. ATP contacts are provided by residues 147 to 149 (GED), isoleucine 186, and 195 to 199 (KMSKS). Residues 195–199 (KMSKS) carry the 'KMSKS' region motif.

The protein belongs to the class-I aminoacyl-tRNA synthetase family. In terms of assembly, homodimer.

It is found in the cytoplasm. It carries out the reaction tRNA(Trp) + L-tryptophan + ATP = L-tryptophyl-tRNA(Trp) + AMP + diphosphate + H(+). Its function is as follows. Catalyzes the attachment of tryptophan to tRNA(Trp). The protein is Tryptophan--tRNA ligase of Wolinella succinogenes (strain ATCC 29543 / DSM 1740 / CCUG 13145 / JCM 31913 / LMG 7466 / NCTC 11488 / FDC 602W) (Vibrio succinogenes).